Reading from the N-terminus, the 241-residue chain is Cell division cycle-associated protein 4 (241 aa).

An SERTA domain is found at 30-77; that stretch reads YSLQRQSLLDMSLVKLQLCHMLVEPNLCRSVLIANTVRQIQEEMTQDG.

In terms of tissue distribution, highest levels of expression in the pancreas, thymus, testis, spleen, liver, placenta and leukocytes. Relatively low levels in the lung, kidney, prostate, ovary, small intestine and colon. Hardly detectable, if at all, in the brain, skeletal muscle and heart.

It localises to the nucleus. Its function is as follows. May participate in the regulation of cell proliferation through the E2F/RB pathway. May be involved in molecular regulation of hematopoietic stem cells and progenitor cell lineage commitment and differentiation. In Homo sapiens (Human), this protein is Cell division cycle-associated protein 4 (CDCA4).